A 197-amino-acid chain; its full sequence is Imidazoleglycerol-phosphate dehydratase (197 aa).

Belongs to the imidazoleglycerol-phosphate dehydratase family.

It localises to the cytoplasm. The enzyme catalyses D-erythro-1-(imidazol-4-yl)glycerol 3-phosphate = 3-(imidazol-4-yl)-2-oxopropyl phosphate + H2O. Its pathway is amino-acid biosynthesis; L-histidine biosynthesis; L-histidine from 5-phospho-alpha-D-ribose 1-diphosphate: step 6/9. In Laribacter hongkongensis (strain HLHK9), this protein is Imidazoleglycerol-phosphate dehydratase.